The chain runs to 596 residues: mRNA export factor mex67 (596 aa).

Ser128, Ser130, and Ser133 each carry phosphoserine. 3 LRR repeats span residues 215 to 236 (DVIS…TTLA), 241 to 262 (KLLN…DPWS), and 263 to 282 (PKTK…PIVT). In terms of domain architecture, LRRCT spans 283-338 (TFANRAMDYQREMVSRFPKLRLLDGNSINSEIIASQSTVPFPVYQSFFDKVETEQI). Positions 338-499 (IVNSFLAAFF…ILIINDLLVI (162 aa)) constitute an NTF2 domain. The TAP-C domain maps to 543–596 (DTRQQIVLKIKAETGLNDYYAHMCCEQNNWDYNSALASFLELKSRNVIPAEAFS).

This sequence belongs to the NXF family. Interacts with mlo3 and rae1.

It is found in the nucleus. It localises to the cytoplasm. Its function is as follows. Involved in the export of mRNA from the nucleus to the cytoplasm. The protein is mRNA export factor mex67 (mex67) of Schizosaccharomyces pombe (strain 972 / ATCC 24843) (Fission yeast).